Consider the following 275-residue polypeptide: NAD kinase (275 aa).

D53 (proton acceptor) is an active-site residue. Residues 53 to 54 (DG), 129 to 130 (NE), R155, D157, and 168 to 173 (TAYNKS) each bind NAD(+).

It belongs to the NAD kinase family. The cofactor is a divalent metal cation.

Its subcellular location is the cytoplasm. The enzyme catalyses NAD(+) + ATP = ADP + NADP(+) + H(+). Functionally, involved in the regulation of the intracellular balance of NAD and NADP, and is a key enzyme in the biosynthesis of NADP. Catalyzes specifically the phosphorylation on 2'-hydroxyl of the adenosine moiety of NAD to yield NADP. The protein is NAD kinase of Streptococcus agalactiae serotype Ia (strain ATCC 27591 / A909 / CDC SS700).